A 391-amino-acid polypeptide reads, in one-letter code: Inositol-tetrakisphosphate 1-kinase 2 (391 aa).

Residues Lys90 and Lys132 each coordinate 1D-myo-inositol 1,3,4-trisphosphate. Arg167 and Lys217 together coordinate ATP. The ATP-grasp domain maps to 178-384; sequence KLSDCSGSLF…FFQNLAQVKY (207 aa). Residues His228 and Lys260 each coordinate 1D-myo-inositol 1,3,4-trisphosphate. Residues 249–260 and Ser275 each bind ATP; that span reads QEFVNHGGVMFK. Positions 340, 355, and 357 each coordinate Mg(2+). Asn357 is a binding site for 1D-myo-inositol 1,3,4-trisphosphate.

Belongs to the ITPK1 family. As to quaternary structure, monomer. Requires Mg(2+) as cofactor. In terms of tissue distribution, expressed in seedling roots, cotyledons, rosette leaves, cauline leaves, stems, flowers, siliques and seeds.

The enzyme catalyses 1D-myo-inositol 3,4,5,6-tetrakisphosphate + ATP = 1D-myo-inositol 1,3,4,5,6-pentakisphosphate + ADP + H(+). The catalysed reaction is 1D-myo-inositol 1,3,4-trisphosphate + ATP = 1D-myo-inositol 1,3,4,5-tetrakisphosphate + ADP + H(+). It catalyses the reaction 1D-myo-inositol 1,3,4-trisphosphate + ATP = 1D-myo-inositol 1,3,4,6-tetrakisphosphate + ADP + H(+). Kinase that can phosphorylate various inositol polyphosphate such as Ins(3,4,5,6)P4 or Ins(1,3,4)P3. Phosphorylates Ins(3,4,5,6)P4 to form InsP5. This reaction is thought to have regulatory importance, since Ins(3,4,5,6)P4 is an inhibitor of plasma membrane Ca(2+)-activated Cl(-) channels, while Ins(1,3,4,5,6)P5 is not. Also phosphorylates Ins(1,3,4)P3 or a racemic mixture of Ins(1,4,6)P3 and Ins(3,4,6)P3 to form InsP4. Ins(1,3,4,6)P4 is an essential molecule in the hexakisphosphate (InsP6) pathway. Plays a role in seed coat development and lipid polyester barrier formation. The chain is Inositol-tetrakisphosphate 1-kinase 2 (ITPK2) from Arabidopsis thaliana (Mouse-ear cress).